Consider the following 216-residue polypeptide: Redox-sensing transcriptional repressor Rex (216 aa).

A DNA-binding region (H-T-H motif) is located at residues Ile-17–Phe-56. Residue Gly-91–Gly-96 participates in NAD(+) binding.

This sequence belongs to the transcriptional regulatory Rex family. Homodimer.

It localises to the cytoplasm. Modulates transcription in response to changes in cellular NADH/NAD(+) redox state. In Leuconostoc citreum (strain KM20), this protein is Redox-sensing transcriptional repressor Rex.